Here is a 3332-residue protein sequence, read N- to C-terminus: Nonribosomal peptide synthetase imqB (3332 aa).

Residues 230–622 (FSEQVKAHPG…IGRKDTQVKV (393 aa)) are adenylation 1. In terms of domain architecture, Carrier 1 spans 764-846 (GRITPQEKLL…DMARCITRVD (83 aa)). Position 801 is an O-(pantetheine 4'-phosphoryl)serine (S801). The condensation 1 stretch occupies residues 886–1314 (DIYPCTPLQE…NCLTRKELHQ (429 aa)). The segment at 1336-1740 (EVSNTRPTAP…GRKDRQLKVR (405 aa)) is adenylation 2. The Carrier 2 domain occupies 1880-1954 (AIATPKEEKL…EMAEKAAETG (75 aa)). Position 1915 is an O-(pantetheine 4'-phosphoryl)serine (S1915). The interval 1992 to 2402 (EDIYPCTPLQ…CLSEIDTQQI (411 aa)) is condensation 2. Positions 2422 to 2819 (AQQAREHPAT…GRKDTQVKIR (398 aa)) are adenylation 3. One can recognise a Carrier 3 domain in the interval 2963–3039 (EVATNDEAAV…DLASRIGRVE (77 aa)). S3000 carries the O-(pantetheine 4'-phosphoryl)serine modification. Positions 3058-3323 (SSNPTLIQGQ…ETTRHIRDFC (266 aa)) are thioesterase (TE) domain.

The protein belongs to the NRP synthetase family.

Its pathway is secondary metabolite biosynthesis. Functionally, nonribosomal peptide synthetase; part of the gene cluster that mediates the biosynthesis of imizoquins A to D, tripeptide-derived alkaloids that serve a protective role against oxidative stress that are essential for normal germination. ImqB is a canonical three-module NRPS that assembles the tripeptide backbone of the imizoquins via condensation of Trp, Tyr, and Leu-derived precursors. N-methylation by imqF and phenol oxidation by imqC, followed by cyclization via the FAD-dependent oxidase imqH carry out the three-step transformation of L-tyrosine into tetrahydroisoquinoline. Importantly, this sequence requires the presence of a free amine in the tyrosine moiety, indicating that isoquinoline formation occurs prior to peptide bond formation. The imidazolidin-4-one ring of imizoquins could form following additional oxidation of the methyl-derived bridgehead carbon by imqH. Lastly, O-methylation by imqG and leucine hydroxylation by imqE complete biosynthesis of the imizoquins. This is Nonribosomal peptide synthetase imqB from Aspergillus flavus (strain ATCC 200026 / FGSC A1120 / IAM 13836 / NRRL 3357 / JCM 12722 / SRRC 167).